Here is a 445-residue protein sequence, read N- to C-terminus: MQDTAKYLIHADITAAGVVERSDVVGAVFGQTEGLLGDELDLRDLQDSKKVGRIDVEIRSEGGQSFGEITVASGLDRVETAILAAALETIEQVGPCRAEIEVSEIEDVRSAKRREVVERATELLNDFEEKSIQTADIVETVRQQVRVADVTDYEGLPAGPRVADSDAIVVVEGRSDVMQLLKYGIKNAVAVEGTDVPDAIADLTAGRTVTSFLDGDRGGDLILKELAQVGDVDYVAVTPSDKSVEDLSRSEVMSALRDKVPYETVASAKSLDSIREEMSQAGESTTADGGAVAAATSDDAADNQPSPSSQTGSAKVETTDGTTSVVDNSNATAVADATTDEETTENGDGPTIPSLSDHIEAVIQTHSGTARLVDEDATLLAEGDADAVVSLLESTEDVPKTVVIDADCSQKLLDVAAQRGVDVVVAAGHGEYVKQPTAVQVRIES.

The region spanning 166–252 is the Toprim domain; sequence DAIVVVEGRS…SVEDLSRSEV (87 aa). 3 residues coordinate Mg(2+): E172, D214, and D216. The disordered stretch occupies residues 276–355; that stretch reads EEMSQAGEST…NGDGPTIPSL (80 aa). Positions 284-298 are enriched in low complexity; sequence STTADGGAVAAATSD. The segment covering 303–313 has biased composition (polar residues); it reads NQPSPSSQTGS. Low complexity predominate over residues 324 to 337; the sequence is SVVDNSNATAVADA.

It belongs to the archaeal DnaG primase family. Forms a ternary complex with MCM helicase and DNA. It depends on Mg(2+) as a cofactor.

The catalysed reaction is ssDNA + n NTP = ssDNA/pppN(pN)n-1 hybrid + (n-1) diphosphate.. RNA polymerase that catalyzes the synthesis of short RNA molecules used as primers for DNA polymerase during DNA replication. This is DNA primase DnaG from Haloarcula marismortui (strain ATCC 43049 / DSM 3752 / JCM 8966 / VKM B-1809) (Halobacterium marismortui).